The following is a 207-amino-acid chain: MTERRVPFSLLRSPSWDPFRDWYPAHSRLFDQAFGLPRLPEEWSQWLSHSGWPGYVRPLPPPAIEGPAAVAAPAYSRLLSRQLSSGVSEIQQTADRWRVSLDVNHFAPEELTVKTKDGVVEITGKHEERQDEHGFISRCFTRKYTLPPGVDPTQVSSSLSPEGTLSVEAPLPKPATQSAEITIPVTFEARAQLGGTEAGKSEKPGTK.

R12 is modified (omega-N-methylarginine). S13 is subject to Phosphoserine. At S15 the chain carries Phosphoserine; by MAPKAPK2 and MAPKAPK3. S27 bears the Phosphoserine mark. Positions 72 to 207 (APAYSRLLSR…AGKSEKPGTK (136 aa)) are interaction with TGFB1I1. Positions 78 to 186 (LLSRQLSSGV…QSAEITIPVT (109 aa)) constitute a sHSP domain. Residues S80 and S84 each carry the phosphoserine; by MAPKAPK2, MAPKAPK3 and MAPKAPK5 modification. Residues S85, S88, and S100 each carry the phosphoserine modification. Residue K125 is modified to N6-acetyllysine. The tract at residues 151 to 181 (DPTQVSSSLSPEGTLSVEAPLPKPATQSAEI) is disordered. Residues 153 to 163 (TQVSSSLSPEG) are compositionally biased toward polar residues. T176 bears the Phosphothreonine mark. S178 and S201 each carry phosphoserine.

It belongs to the small heat shock protein (HSP20) family. As to quaternary structure, homooligomer. Homodimer; becomes monomeric upon activation. Heterooligomer; with HSPB6. Associates with alpha- and beta-tubulin. Interacts with TGFB1I1. Interacts with CRYAB. Interacts with HSPB8. Interacts with HSPBAP1. Phosphorylated upon exposure to protein kinase C activators and heat shock. Phosphorylation by MAPKAPK2 and MAPKAPK3 in response to stress dissociates HSPB1 from large small heat-shock protein (sHsps) oligomers and impairs its chaperone activity and ability to protect against oxidative stress effectively. Phosphorylation by MAPKAPK5 in response to PKA stimulation induces F-actin rearrangement.

The protein resides in the cytoplasm. It localises to the nucleus. The protein localises to the cytoskeleton. It is found in the spindle. Functionally, small heat shock protein which functions as a molecular chaperone probably maintaining denatured proteins in a folding-competent state. Plays a role in stress resistance and actin organization. Through its molecular chaperone activity may regulate numerous biological processes including the phosphorylation and the axonal transport of neurofilament proteins. This Sus scrofa (Pig) protein is Heat shock protein beta-1 (HSPB1).